The sequence spans 297 residues: Nucleotide-binding protein Bsph_0448 (297 aa).

Position 19-26 (19-26 (GMSGAGKT)) interacts with ATP. 70–73 (DMRG) contacts GTP.

The protein belongs to the RapZ-like family.

Its function is as follows. Displays ATPase and GTPase activities. The chain is Nucleotide-binding protein Bsph_0448 from Lysinibacillus sphaericus (strain C3-41).